The chain runs to 218 residues: 2-phospho-L-lactate guanylyltransferase (218 aa).

It belongs to the CofC family. As to quaternary structure, homodimer.

The enzyme catalyses (2S)-2-phospholactate + GTP + H(+) = (2S)-lactyl-2-diphospho-5'-guanosine + diphosphate. The protein operates within cofactor biosynthesis; coenzyme F420 biosynthesis. In terms of biological role, guanylyltransferase that catalyzes the activation of (2S)-2-phospholactate (2-PL) as (2S)-lactyl-2-diphospho-5'-guanosine, via the condensation of 2-PL with GTP. It is involved in the biosynthesis of coenzyme F420, a hydride carrier cofactor. The protein is 2-phospho-L-lactate guanylyltransferase of Methanocaldococcus fervens (strain DSM 4213 / JCM 15782 / AG86) (Methanococcus fervens).